The following is a 474-amino-acid chain: Glutathione synthetase (474 aa).

N-acetylalanine is present on A2. R125 contacts substrate. ATP is bound at residue E144. Mg(2+) contacts are provided by E144 and N146. Substrate contacts are provided by residues 148–151, 214–216, Q220, and 267–270; these read ISAS, ERN, and RDGY. ATP is bound by residues K305, 364–373, Y375, and 398–401; these read KPQREGGGNN and MEKT. E368 serves as a coordination point for Mg(2+). S415 is modified (phosphoserine). An ATP-binding site is contributed by E425. Residue R450 coordinates substrate. Residues K452 and D458 each coordinate ATP. 461 to 462 contacts substrate; it reads VA.

The protein belongs to the eukaryotic GSH synthase family. In terms of assembly, homodimer. It depends on Mg(2+) as a cofactor.

The enzyme catalyses gamma-L-glutamyl-L-cysteine + glycine + ATP = glutathione + ADP + phosphate + H(+). It functions in the pathway sulfur metabolism; glutathione biosynthesis; glutathione from L-cysteine and L-glutamate: step 2/2. Functionally, catalyzes the production of glutathione from gamma-glutamylcysteine and glycine in an ATP-dependent manner. Glutathione (gamma-glutamylcysteinylglycine, GSH) is the most abundant intracellular thiol in living aerobic cells and is required for numerous processes including the protection of cells against oxidative damage, amino acid transport, the detoxification of foreign compounds, the maintenance of protein sulfhydryl groups in a reduced state and acts as a cofactor for a number of enzymes. The polypeptide is Glutathione synthetase (GSS) (Macaca fascicularis (Crab-eating macaque)).